A 543-amino-acid polypeptide reads, in one-letter code: Zinc finger protein 34 (543 aa).

The region spanning 14 to 87 is the KRAB domain; that stretch reads VTFEDVAVFL…DMHGAEQPSV (74 aa). Residues 84–151 are disordered; sequence QPSVDGSAHG…PGEQRGPRLV (68 aa). Residues 124 to 147 show a composition bias toward basic and acidic residues; that stretch reads EPGEVHERVREPEGRLDRPGEQRG. 12 C2H2-type zinc fingers span residues 179-201, 234-256, 262-284, 290-312, 318-340, 346-368, 374-396, 402-424, 430-452, 458-480, 486-508, and 514-536; these read HKCD…KRVH, YYCG…QRLH, YKCE…RRMH, YRCD…QRIH, YKCS…QRIH, YKCS…RRTH, YECK…QRIH, YKCN…QRSH, YECN…QRIH, YKCS…QRSH, YKCA…RRIH, and YTCG…QRIH.

This sequence belongs to the krueppel C2H2-type zinc-finger protein family.

The protein localises to the nucleus. Its function is as follows. May be involved in transcriptional regulation. The polypeptide is Zinc finger protein 34 (ZNF34) (Bos taurus (Bovine)).